The sequence spans 446 residues: tRNA modification GTPase MnmE (446 aa).

The (6S)-5-formyl-5,6,7,8-tetrahydrofolate site is built by R24, E81, and K120. In terms of domain architecture, TrmE-type G spans 216–368 (GLHAVLIGPP…LHIRLRALAL (153 aa)). N226 is a K(+) binding site. GTP contacts are provided by residues 226–231 (NAGKSS), 245–251 (TDVAGTT), and 270–273 (DTAG). Residue S230 coordinates Mg(2+). Positions 245, 247, and 250 each coordinate K(+). Mg(2+) is bound at residue T251. K446 lines the (6S)-5-formyl-5,6,7,8-tetrahydrofolate pocket.

It belongs to the TRAFAC class TrmE-Era-EngA-EngB-Septin-like GTPase superfamily. TrmE GTPase family. Homodimer. Heterotetramer of two MnmE and two MnmG subunits. It depends on K(+) as a cofactor.

Its subcellular location is the cytoplasm. Exhibits a very high intrinsic GTPase hydrolysis rate. Involved in the addition of a carboxymethylaminomethyl (cmnm) group at the wobble position (U34) of certain tRNAs, forming tRNA-cmnm(5)s(2)U34. In Xanthomonas euvesicatoria pv. vesicatoria (strain 85-10) (Xanthomonas campestris pv. vesicatoria), this protein is tRNA modification GTPase MnmE.